The primary structure comprises 380 residues: Chaperone protein DnaJ (380 aa).

Residues 5–69 (DYYEILGVSK…QKRAHYDQFG (65 aa)) enclose the J domain. The segment at 135–217 (GKETDIEIPR…CGGTGRVKKR (83 aa)) adopts a CR-type zinc-finger fold. Zn(2+) contacts are provided by Cys148, Cys151, Cys165, Cys168, Cys191, Cys194, Cys205, and Cys208. CXXCXGXG motif repeat units lie at residues 148 to 155 (CDTCHGTG), 165 to 172 (CSYCHGTG), 191 to 198 (CPYCGGTG), and 205 to 212 (CTTCGGTG).

This sequence belongs to the DnaJ family. As to quaternary structure, homodimer. Zn(2+) is required as a cofactor.

Its subcellular location is the cytoplasm. Its function is as follows. Participates actively in the response to hyperosmotic and heat shock by preventing the aggregation of stress-denatured proteins and by disaggregating proteins, also in an autonomous, DnaK-independent fashion. Unfolded proteins bind initially to DnaJ; upon interaction with the DnaJ-bound protein, DnaK hydrolyzes its bound ATP, resulting in the formation of a stable complex. GrpE releases ADP from DnaK; ATP binding to DnaK triggers the release of the substrate protein, thus completing the reaction cycle. Several rounds of ATP-dependent interactions between DnaJ, DnaK and GrpE are required for fully efficient folding. Also involved, together with DnaK and GrpE, in the DNA replication of plasmids through activation of initiation proteins. In Geobacillus sp. (strain WCH70), this protein is Chaperone protein DnaJ.